The following is a 500-amino-acid chain: Probable glycine dehydrogenase (decarboxylating) subunit 2 (500 aa).

A disordered region spans residues 1-25 (MLIFEHSRPGRRNYSQSPKAAEATD). At Lys-263 the chain carries N6-(pyridoxal phosphate)lysine.

The protein belongs to the GcvP family. C-terminal subunit subfamily. The glycine cleavage system is composed of four proteins: P, T, L and H. In this organism, the P 'protein' is a heterodimer of two subunits. Pyridoxal 5'-phosphate serves as cofactor.

It catalyses the reaction N(6)-[(R)-lipoyl]-L-lysyl-[glycine-cleavage complex H protein] + glycine + H(+) = N(6)-[(R)-S(8)-aminomethyldihydrolipoyl]-L-lysyl-[glycine-cleavage complex H protein] + CO2. Functionally, the glycine cleavage system catalyzes the degradation of glycine. The P protein binds the alpha-amino group of glycine through its pyridoxal phosphate cofactor; CO(2) is released and the remaining methylamine moiety is then transferred to the lipoamide cofactor of the H protein. This is Probable glycine dehydrogenase (decarboxylating) subunit 2 from Nitrosospira multiformis (strain ATCC 25196 / NCIMB 11849 / C 71).